The chain runs to 23 residues: GLKEIFKAGLGSLVKGIAAHVAN.

Asn-23 carries the post-translational modification Asparagine amide.

Expressed by the skin glands.

It is found in the secreted. Its subcellular location is the target cell membrane. Antibacterial peptide with amphipathic alpha-helical structure. Shows selective growth inhibitory activity against the Gram-negative bacteria E.coli (MIC=25 uM). Has a weak hemolytic activity against human erythrocytes (LC(50)=200 uM). Is not active against S.aureus (MIC=200 uM). In Alytes obstetricans (Common midwife toad), this protein is Alyteserin-1b.